A 612-amino-acid chain; its full sequence is Kelch repeat and BTB domain-containing protein 3 (612 aa).

Residues 52–119 enclose the BTB domain; sequence YDFKIIMKDE…AYTGKTKITD (68 aa). Residues 154–254 form the BACK domain; sequence CLQLLSISDS…QLSEETLQDC (101 aa). 5 Kelch repeats span residues 295–341, 343–403, 404–454, 456–506, and 552–599; these read KYIF…SSYG, KIFL…MALD, RLFV…TCQN, IYVL…KAVP, and KIYI…VIQF.

The polypeptide is Kelch repeat and BTB domain-containing protein 3 (Homo sapiens (Human)).